The following is a 520-amino-acid chain: GMP synthase [glutamine-hydrolyzing] (520 aa).

Residues 4–202 (KILILDFGSQ…VHDICGCGSD (199 aa)) enclose the Glutamine amidotransferase type-1 domain. The active-site Nucleophile is C81. Catalysis depends on residues H176 and E178. Residues 203-395 (WNMPDYVEEA…LGLPHDMVYR (193 aa)) enclose the GMPS ATP-PPase domain. 230-236 (SGGVDSS) provides a ligand contact to ATP.

As to quaternary structure, homodimer.

It carries out the reaction XMP + L-glutamine + ATP + H2O = GMP + L-glutamate + AMP + diphosphate + 2 H(+). It participates in purine metabolism; GMP biosynthesis; GMP from XMP (L-Gln route): step 1/1. In terms of biological role, catalyzes the synthesis of GMP from XMP. The protein is GMP synthase [glutamine-hydrolyzing] of Thiobacillus denitrificans (strain ATCC 25259 / T1).